An 845-amino-acid polypeptide reads, in one-letter code: Protein P (845 aa).

The tract at residues Met-1 to Gln-179 is terminal protein domain (TP). Residues Glu-180 to Arg-348 are spacer. Positions Gly-226–Ile-245 are disordered. Residues Glu-349 to Gln-692 form a polymerase/reverse transcriptase domain (RT) region. One can recognise a Reverse transcriptase domain in the interval Glu-359–Ile-602. Residues Asp-431, Asp-553, and Asp-554 each coordinate Mg(2+).

The protein belongs to the hepadnaviridae P protein family.

It catalyses the reaction DNA(n) + a 2'-deoxyribonucleoside 5'-triphosphate = DNA(n+1) + diphosphate. The catalysed reaction is Endonucleolytic cleavage to 5'-phosphomonoester.. With respect to regulation, activated by host HSP70 and HSP40 in vitro to be able to bind the epsilon loop of the pgRNA. Because deletion of the RNase H region renders the protein partly chaperone-independent, the chaperones may be needed indirectly to relieve occlusion of the RNA-binding site by this domain. Inhibited by several reverse-transcriptase inhibitors: Lamivudine, Adefovir and Entecavir. Multifunctional enzyme that converts the viral RNA genome into dsDNA in viral cytoplasmic capsids. This enzyme displays a DNA polymerase activity that can copy either DNA or RNA templates, and a ribonuclease H (RNase H) activity that cleaves the RNA strand of RNA-DNA heteroduplexes in a partially processive 3'- to 5'-endonucleasic mode. Neo-synthesized pregenomic RNA (pgRNA) are encapsidated together with the P protein, and reverse-transcribed inside the nucleocapsid. Initiation of reverse-transcription occurs first by binding the epsilon loop on the pgRNA genome, and is initiated by protein priming, thereby the 5'-end of (-)DNA is covalently linked to P protein. Partial (+)DNA is synthesized from the (-)DNA template and generates the relaxed circular DNA (RC-DNA) genome. After budding and infection, the RC-DNA migrates in the nucleus, and is converted into a plasmid-like covalently closed circular DNA (cccDNA). The activity of P protein does not seem to be necessary for cccDNA generation, and is presumably released from (+)DNA by host nuclear DNA repair machinery. This chain is Protein P, found in Homo sapiens (Human).